Consider the following 387-residue polypeptide: Phosphoglycerate kinase (387 aa).

Substrate is bound by residues 21–23, R36, 59–62, R113, and R146; these read DLN and HLGR. ATP is bound by residues K197, E314, and 340-343; that span reads GGDT.

It belongs to the phosphoglycerate kinase family. In terms of assembly, monomer.

The protein resides in the cytoplasm. The enzyme catalyses (2R)-3-phosphoglycerate + ATP = (2R)-3-phospho-glyceroyl phosphate + ADP. It participates in carbohydrate degradation; glycolysis; pyruvate from D-glyceraldehyde 3-phosphate: step 2/5. The sequence is that of Phosphoglycerate kinase from Yersinia pestis bv. Antiqua (strain Antiqua).